Consider the following 425-residue polypeptide: Putative integrase/recombinase y4rF (425 aa).

One can recognise a Core-binding (CB) domain in the interval 123–210 (DPDALLLASF…HIRTFLRFLC (88 aa)). The region spanning 233–418 (HLPPRLAWGD…AASQLAEVAL (186 aa)) is the Tyr recombinase domain. Active-site residues include arginine 273, lysine 298, histidine 370, arginine 373, and histidine 396. The active-site O-(3'-phospho-DNA)-tyrosine intermediate is the tyrosine 405.

This sequence belongs to the 'phage' integrase family.

This is Putative integrase/recombinase y4rF from Sinorhizobium fredii (strain NBRC 101917 / NGR234).